The sequence spans 225 residues: Holliday junction branch migration complex subunit RuvA (225 aa).

Residues 1-71 (MISWINGDLV…EDSDLLFGFT (71 aa)) form a domain I region. Positions 72 to 150 (SKDQKNFFIE…SEILSEEEKS (79 aa)) are domain II. The interval 151–161 (KDEFEIKDPEI) is flexible linker. Residues 161–225 (IIKMIEDLQL…LDEDSSNKDR (65 aa)) form a domain III region.

The protein belongs to the RuvA family. As to quaternary structure, homotetramer. Forms an RuvA(8)-RuvB(12)-Holliday junction (HJ) complex. HJ DNA is sandwiched between 2 RuvA tetramers; dsDNA enters through RuvA and exits via RuvB. An RuvB hexamer assembles on each DNA strand where it exits the tetramer. Each RuvB hexamer is contacted by two RuvA subunits (via domain III) on 2 adjacent RuvB subunits; this complex drives branch migration. In the full resolvosome a probable DNA-RuvA(4)-RuvB(12)-RuvC(2) complex forms which resolves the HJ.

The protein resides in the cytoplasm. Its function is as follows. The RuvA-RuvB-RuvC complex processes Holliday junction (HJ) DNA during genetic recombination and DNA repair, while the RuvA-RuvB complex plays an important role in the rescue of blocked DNA replication forks via replication fork reversal (RFR). RuvA specifically binds to HJ cruciform DNA, conferring on it an open structure. The RuvB hexamer acts as an ATP-dependent pump, pulling dsDNA into and through the RuvAB complex. HJ branch migration allows RuvC to scan DNA until it finds its consensus sequence, where it cleaves and resolves the cruciform DNA. In Prochlorococcus marinus (strain AS9601), this protein is Holliday junction branch migration complex subunit RuvA.